The following is a 418-amino-acid chain: Glutamyl-tRNA reductase (418 aa).

Residues 49–52 (TCNR), S106, 111–113 (EPQ), and Q117 contribute to the substrate site. The Nucleophile role is filled by C50. Position 186–191 (186–191 (GAGEMI)) interacts with NADP(+).

Belongs to the glutamyl-tRNA reductase family. In terms of assembly, homodimer.

It carries out the reaction (S)-4-amino-5-oxopentanoate + tRNA(Glu) + NADP(+) = L-glutamyl-tRNA(Glu) + NADPH + H(+). The protein operates within porphyrin-containing compound metabolism; protoporphyrin-IX biosynthesis; 5-aminolevulinate from L-glutamyl-tRNA(Glu): step 1/2. Its function is as follows. Catalyzes the NADPH-dependent reduction of glutamyl-tRNA(Glu) to glutamate 1-semialdehyde (GSA). The sequence is that of Glutamyl-tRNA reductase from Alcanivorax borkumensis (strain ATCC 700651 / DSM 11573 / NCIMB 13689 / SK2).